A 400-amino-acid polypeptide reads, in one-letter code: Probable transposase for insertion sequence element ISRM3-like (400 aa).

Belongs to the transposase mutator family.

Required for the transposition of the insertion element. This Sinorhizobium fredii (strain NBRC 101917 / NGR234) protein is Probable transposase for insertion sequence element ISRM3-like.